Here is a 465-residue protein sequence, read N- to C-terminus: Serine hydroxymethyltransferase (465 aa).

Lysine 241 is modified (N6-(pyridoxal phosphate)lysine).

Belongs to the SHMT family. Homotetramer. Pyridoxal 5'-phosphate serves as cofactor. Highest expression in the ovary and testis. 6- to 7-fold lower expression in hemocyte, silk gland, midgut and fat body.

It catalyses the reaction (6R)-5,10-methylene-5,6,7,8-tetrahydrofolate + glycine + H2O = (6S)-5,6,7,8-tetrahydrofolate + L-serine. The protein operates within one-carbon metabolism; tetrahydrofolate interconversion. Functionally, interconversion of serine and glycine. This chain is Serine hydroxymethyltransferase (692975), found in Bombyx mori (Silk moth).